A 600-amino-acid chain; its full sequence is Kelch-like protein 24 (600 aa).

One can recognise a BTB domain in the interval 66–133; it reads TDVIICVEGK…VYTGKVKITT (68 aa). Residues 168-270 enclose the BACK domain; sequence CLGIQRFADT…HPNYFVQTVE (103 aa). Kelch repeat units follow at residues 314-363, 365-407, 408-454, 456-502, 504-544, and 546-592; these read VIVV…ALRN, ILVS…VLLG, KVYV…SCIG, LFVI…SLNN, IYVA…VCNG, and IYIL…TIHR.

As to quaternary structure, forms homodimers. Interacts with GRIK2. Component of the BCR(KLHL24) E3 ubiquitin ligase complex, composed of CUL3, RBX1 and KLHL24. Interacts with CUL3. Interacts with KRT14. Autoubiquitinated. Autoubiquitination leads to proteasomal degradation and is necessary to control KLHL24 levels. In terms of tissue distribution, expressed in the brain.

It localises to the perikaryon. The protein resides in the cell projection. The protein localises to the axon. It is found in the cytoplasm. Its subcellular location is the cell junction. It localises to the desmosome. The protein resides in the adherens junction. Controls KRT14 levels during keratinocytes differentiation. As part of the BCR(KLHL24) E3 ubiquitin ligase complex, mediates ubiquitination of KRT14. Specifically reduces kainate receptor-mediated currents in hippocampal neurons, most probably by modulating channel properties. Has a crucial role in cardiac development and function. This chain is Kelch-like protein 24 (Klhl24), found in Mus musculus (Mouse).